Here is a 662-residue protein sequence, read N- to C-terminus: MDWDQDRSNTELRKEKSRDAARSRRSQETEVLYQLAHTLPFARGVSAHLDKASIMRLTISYLRMHRLCAAGEWNQVEKGGEPLDACYLKALEGFVMVLTAEGDMAYLSENVSKHLGLSQLELIGHSIFDFIHPCDQEELQDALTPRPNLSKKKLEAPTERHFSLRMKSTLTSRGRTLNLKAATWKVLHCSGHMRAYKPPAQTSPAGSPRSEPPLQCLVLICEAIPHPASLEPPLGRGAFLSRHSLDMKFTYCDERIAEVAGYSPDDLIGCSAYEYIHALDSDAVSRSIHTLLSKGQAVTGQYRFLARTGGYLWTQTQATVVSGGRGPQSESIICVHFLISRVEETGVVLSLEQTEQHTRRPPRLSASSQKGIPGNSVDSPAPRILAFLHPPALSEASLAADPRRFCSPDLRRLMAPILDGPPPAATPSTPQATRRPQSPLPADLPDKLTVGLENAHRLSTAQKNKTVETDLDIAQDPDTLDLEMLAPYISMDDDFQLNSSEQLPKVHRRPPRVARRPRARSFHGLSPPIPEPSLLPRWGSDPRLNCSSPSRGDRPTASLMPGTRKRALAQSSEDKGLELLETKPPKRSPRLEPGSFLLPPLSLSFLLQGRQLPGNQQDPRAPLVHSHEPLGLAPSLLSLCQHEETVQPRNRFPPAAGLGQTH.

The segment at 1-25 is disordered; the sequence is MDWDQDRSNTELRKEKSRDAARSRR. The bHLH domain maps to 12–65; sequence LRKEKSRDAARSRRSQETEVLYQLAHTLPFARGVSAHLDKASIMRLTISYLRMH. Residues 75 to 98 form a nuclear localization signal (isoform 2) region; the sequence is QVEKGGEPLDACYLKALEGFVMVL. PAS domains are found at residues 80–150 and 225–295; these read GEPL…PNLS and PHPA…LSKG. The segment at 228 to 272 is nuclear export signal (isoform 2); the sequence is ASLEPPLGRGAFLSRHSLDMKFTYCDERIAEVAGYSPDDLIGCSA. Disordered stretches follow at residues 352–377 and 416–446; these read EQTE…GNSV and PILD…DLPD. The LRRLL signature appears at 414–418; it reads MAPIL. A compositionally biased stretch (low complexity) spans 426–437; sequence TPSTPQATRRPQ. Residues 448–581 are ODD; sequence LTVGLENAHR…SEDKGLELLE (134 aa). The interval 450-501 is NTAD; that stretch reads VGLENAHRLSTAQKNKTVETDLDIAQDPDTLDLEMLAPYISMDDDFQLNSSE. A Glycyl lysine isopeptide (Lys-Gly) (interchain with G-Cter in ubiquitin) cross-link involves residue Lys463. The short motif at 485 to 492 is the LAPYISMD element; the sequence is LAPYISMD. Pro487 carries the 4-hydroxyproline modification. The disordered stretch occupies residues 500–595; the sequence is SEQLPKVHRR…KRSPRLEPGS (96 aa). The segment covering 505 to 521 has biased composition (basic residues); that stretch reads KVHRRPPRVARRPRARS. Lys565 is covalently cross-linked (Glycyl lysine isopeptide (Lys-Gly) (interchain with G-Cter in ubiquitin)). Residues 572 to 584 show a composition bias toward basic and acidic residues; sequence SEDKGLELLETKP.

Isoform 1 interacts with ARNT. Isoform 2 interacts with HIF1A. Isoform 2 interacts EPAS1. Isoform 2 interacts (via C-terminus domain) with BAD; the interaction reduces the binding between BAD and BAX. Isoform 2 (via C-terminus domain) interacts with BCL2L2 and MCL1. Interacts with VHL. In normoxia, hydroxylated on Pro-487 in the oxygen-dependent degradation domain (ODD) by PHD. The hydroxylated proline promotes interaction with VHL, initiating rapid ubiquitination and subsequent proteasomal degradation. Post-translationally, ubiquitinated; ubiquitination occurs in a VHL- and oxygen-dependent pathway and subsequently targeted for proteasomal degradation. As to expression, isoform 3 is expressed in endothelial cells of vessels and capillaries in alveoli of the neonatal lung (at protein level). Expressed in lung, brain, heart and kidney. Isoform 2 is expressed in heart and lung. Isoform 2 is highly expressed in the epithelial cell layer of the cornea with lower expression in the layers of ganglion cells, inner nuclear cells, and rods and cones of the retina. Isoform 2 is expressed in the cerebellum only in the Purkinje cell layer.

It localises to the nucleus. The protein resides in the cytoplasm. It is found in the nucleus speckle. Its subcellular location is the mitochondrion. In terms of biological role, acts as a transcriptional regulator in adaptive response to low oxygen tension. Acts as a regulator of hypoxia-inducible gene expression. Plays a role in the development of the cardiorespiratory system. Functionally, acts as a positive regulator of hypoxia-inducible gene expression. Associates to core DNA sequence 5'-TACGTG-3' within the hypoxia response element (HRE) of target gene promoters in a ARNT-dependent manner, and hence also participates in the transcriptional activation of reporter genes driven by HRE. Its function is as follows. Attenuates the ability of transcription factor HIF1A, EPAS1 and the HIF1A-ARNT complex to bind to hypoxia-responsive elements (HRE) located within the enhancer/promoter of hypoxia-inducible target genes and hence inhibits HRE-driven transcriptional activation. Functions as an inhibitor of angiogenesis in hypoxic cells of the cornea. May act as a tumor suppressor. May also be involved in apoptosis. Attenuates the ability of transcription factor HIF1A, EPAS1 and the HIF1A-ARNT complex to bind to hypoxia-responsive elements (HRE) located within the enhancer/promoter of hypoxia-inducible target genes and hence inhibits HRE-driven transcriptional activation. Also plays a role in the development of the lung and heart during embryonic and neonatal stages. The protein is Hypoxia-inducible factor 3-alpha of Mus musculus (Mouse).